The sequence spans 370 residues: GTPase Obg (370 aa).

An Obg domain is found at 1–159; it reads MKFVDEAYID…KKLKLELRVL (159 aa). The 174-residue stretch at 160 to 333 folds into the OBG-type G domain; the sequence is ADVGLLGMPN…LVQAIYQHVA (174 aa). GTP is bound by residues 166–173, 191–195, 213–216, 283–286, and 314–316; these read GMPNAGKS, FTTLH, DVPG, NKLD, and SAL. Mg(2+) contacts are provided by S173 and T193. A disordered region spans residues 346 to 370; it reads FAEPEADESDDEPRFAPQADDPRFR.

This sequence belongs to the TRAFAC class OBG-HflX-like GTPase superfamily. OBG GTPase family. In terms of assembly, monomer. Requires Mg(2+) as cofactor.

Its subcellular location is the cytoplasm. Functionally, an essential GTPase which binds GTP, GDP and possibly (p)ppGpp with moderate affinity, with high nucleotide exchange rates and a fairly low GTP hydrolysis rate. Plays a role in control of the cell cycle, stress response, ribosome biogenesis and in those bacteria that undergo differentiation, in morphogenesis control. This is GTPase Obg from Methylibium petroleiphilum (strain ATCC BAA-1232 / LMG 22953 / PM1).